We begin with the raw amino-acid sequence, 317 residues long: MGEVQREKVAVIIGPTAVGKTKLSIDLAKALNGEIISGDSMQIYRTMDIGTAKVTQAEMDGIPHYMVDIKNPEDSFSVAEFQERVRKHIREITERGKLPIIVGGTGLYIQSVLFDYQFTDDAGDVIYREQMEKLALERGVEYVHKKLQEVDPESAERIHANNVRRVIRALEIFHTTGEKMSDQIEKQEKELLYDVSLIGLTMDREMLYDRINLRVDLMMEQGLLEEVEGLYNRGIRDCQSIQAIGYKEIYDYFENRASLEDAVSQLKTNSRRYAKRQLTWFRNKMDVTWFDVTDGEKTSEILRYIEGKLQVKSNNSK.

An ATP-binding site is contributed by 14-21; it reads GPTAVGKT. 16–21 lines the substrate pocket; sequence TAVGKT. The interaction with substrate tRNA stretch occupies residues 39-42; it reads DSMQ.

The protein belongs to the IPP transferase family. In terms of assembly, monomer. Mg(2+) is required as a cofactor.

It carries out the reaction adenosine(37) in tRNA + dimethylallyl diphosphate = N(6)-dimethylallyladenosine(37) in tRNA + diphosphate. In terms of biological role, catalyzes the transfer of a dimethylallyl group onto the adenine at position 37 in tRNAs that read codons beginning with uridine, leading to the formation of N6-(dimethylallyl)adenosine (i(6)A). In Bacillus cereus (strain G9842), this protein is tRNA dimethylallyltransferase.